The following is a 270-amino-acid chain: Hydroxyethylthiazole kinase (270 aa).

Residue Met-46 coordinates substrate. ATP contacts are provided by Arg-120 and Thr-166. Residue Gly-193 coordinates substrate.

This sequence belongs to the Thz kinase family. Mg(2+) is required as a cofactor.

The enzyme catalyses 5-(2-hydroxyethyl)-4-methylthiazole + ATP = 4-methyl-5-(2-phosphooxyethyl)-thiazole + ADP + H(+). It functions in the pathway cofactor biosynthesis; thiamine diphosphate biosynthesis; 4-methyl-5-(2-phosphoethyl)-thiazole from 5-(2-hydroxyethyl)-4-methylthiazole: step 1/1. Catalyzes the phosphorylation of the hydroxyl group of 4-methyl-5-beta-hydroxyethylthiazole (THZ). The chain is Hydroxyethylthiazole kinase from Herpetosiphon aurantiacus (strain ATCC 23779 / DSM 785 / 114-95).